We begin with the raw amino-acid sequence, 167 residues long: Putative pre-16S rRNA nuclease (167 aa).

This sequence belongs to the YqgF nuclease family.

It localises to the cytoplasm. In terms of biological role, could be a nuclease involved in processing of the 5'-end of pre-16S rRNA. This is Putative pre-16S rRNA nuclease from Streptomyces coelicolor (strain ATCC BAA-471 / A3(2) / M145).